Reading from the N-terminus, the 200-residue chain is Transgelin (200 aa).

Ser-2 is subject to N-acetylserine. The residue at position 11 (Ser-11) is a Phosphoserine. The Calponin-homology (CH) domain maps to 26-136 (PEAIQNIKIW…QTLKSLSRYA (111 aa)). Residues 144–168 (FPVLGPQLSTKKPRPPVKSKPKHLQ) are disordered. Residues 151–164 (LSTKKPRPPVKSKP) form an interaction with SH3 domain of ABP1 region. Residues 154 to 165 (KKPRPPVKSKPK) are compositionally biased toward basic residues.

Binds to actin. Interacts with ABP1.

Its subcellular location is the cytoplasm. The protein resides in the cytoskeleton. The protein localises to the actin patch. Has actin-binding and actin-bundling activity. Stabilizes actin filaments against disassembly. In Saccharomyces cerevisiae (strain ATCC 204508 / S288c) (Baker's yeast), this protein is Transgelin (SCP1).